Here is a 286-residue protein sequence, read N- to C-terminus: Nucleotide-binding protein HS_1178 (286 aa).

Residue G8–S15 participates in ATP binding. D56 to N59 contributes to the GTP binding site.

The protein belongs to the RapZ-like family.

Functionally, displays ATPase and GTPase activities. This is Nucleotide-binding protein HS_1178 from Histophilus somni (strain 129Pt) (Haemophilus somnus).